The chain runs to 427 residues: Glutamate-1-semialdehyde 2,1-aminomutase (427 aa).

K265 is subject to N6-(pyridoxal phosphate)lysine.

This sequence belongs to the class-III pyridoxal-phosphate-dependent aminotransferase family. HemL subfamily. In terms of assembly, homodimer. Pyridoxal 5'-phosphate is required as a cofactor.

Its subcellular location is the cytoplasm. The enzyme catalyses (S)-4-amino-5-oxopentanoate = 5-aminolevulinate. It participates in porphyrin-containing compound metabolism; protoporphyrin-IX biosynthesis; 5-aminolevulinate from L-glutamyl-tRNA(Glu): step 2/2. The protein is Glutamate-1-semialdehyde 2,1-aminomutase of Bordetella bronchiseptica (strain ATCC BAA-588 / NCTC 13252 / RB50) (Alcaligenes bronchisepticus).